A 370-amino-acid chain; its full sequence is Anhydro-N-acetylmuramic acid kinase (370 aa).

ATP is bound at residue 12 to 19 (GTSLDGVD).

The protein belongs to the anhydro-N-acetylmuramic acid kinase family.

The catalysed reaction is 1,6-anhydro-N-acetyl-beta-muramate + ATP + H2O = N-acetyl-D-muramate 6-phosphate + ADP + H(+). It functions in the pathway amino-sugar metabolism; 1,6-anhydro-N-acetylmuramate degradation. Its pathway is cell wall biogenesis; peptidoglycan recycling. Catalyzes the specific phosphorylation of 1,6-anhydro-N-acetylmuramic acid (anhMurNAc) with the simultaneous cleavage of the 1,6-anhydro ring, generating MurNAc-6-P. Is required for the utilization of anhMurNAc either imported from the medium or derived from its own cell wall murein, and thus plays a role in cell wall recycling. In Yersinia pseudotuberculosis serotype O:1b (strain IP 31758), this protein is Anhydro-N-acetylmuramic acid kinase.